A 641-amino-acid polypeptide reads, in one-letter code: SUMO-activating enzyme subunit 2-B (641 aa).

ATP-binding positions include 24–29 (GAGGIG), Asp48, 56–59 (NLNR), Lys72, 95–96 (SI), and 117–122 (DNNAAR). Residues Cys158 and Cys161 each contribute to the Zn(2+) site. Cys173 serves as the catalytic Glycyl thioester intermediate. 2 residues coordinate Zn(2+): Cys439 and Cys442. The interval 546–641 (GDVPEKGPQK…EEDDDIIALD (96 aa)) is disordered. A compositionally biased stretch (basic and acidic residues) spans 548–561 (VPEKGPQKPPEESV). Polar residues predominate over residues 562-579 (KNITNGSDDGAQPSTSKA). Acidic residues-rich tracts occupy residues 582-594 (QDDV…DEES) and 630-641 (PVEEDDDIIALD).

Belongs to the ubiquitin-activating E1 family. Heterodimer of sae1 and uba2/sae2. The heterodimer corresponds to the two domains that are encoded on a single polypeptide chain in ubiquitin-activating enzyme E1. Interacts with ube2i.

Its subcellular location is the nucleus. It functions in the pathway protein modification; protein sumoylation. In terms of biological role, the heterodimer acts as an E1 ligase for sumo1, sumo2, and sumo3. It mediates ATP-dependent activation of sumo proteins followed by formation of a thioester bond between a sumo protein and a conserved active site cysteine residue on uba2/sae2. This Xenopus laevis (African clawed frog) protein is SUMO-activating enzyme subunit 2-B (uba2-b).